The following is a 359-amino-acid chain: Protein Wnt-8a (359 aa).

A signal peptide spans 1–25 (MNPCQIFASLVMSICCHILSSTAWS). Residues Cys-55 and Cys-66 are joined by a disulfide bond. N-linked (GlcNAc...) asparagine glycosylation occurs at Asn-104. 10 cysteine pairs are disulfide-bonded: Cys-105–Cys-113, Cys-115–Cys-133, Cys-181–Cys-195, Cys-183–Cys-190, Cys-260–Cys-298, Cys-276–Cys-291, Cys-295–Cys-337, Cys-313–Cys-328, Cys-315–Cys-325, and Cys-320–Cys-321. Ser-187 is lipidated: O-palmitoleoyl serine. Asn-263 and Asn-282 each carry an N-linked (GlcNAc...) asparagine glycan. Asn-348 is a glycosylation site (N-linked (GlcNAc...) asparagine).

It belongs to the Wnt family. Palmitoleoylation is required for efficient binding to frizzled receptors. Depalmitoleoylation leads to Wnt signaling pathway inhibition. In terms of processing, proteolytic processing by tiki1 and tiki2 promotes oxidation and formation of large disulfide-bond oligomers, leading to inactivation of wnt8. Expressed in the margin of the pregastrula embryo destined to be the future mesoderm.

It is found in the secreted. The protein localises to the extracellular space. Its subcellular location is the extracellular matrix. Its function is as follows. Ligand for members of the frizzled family of seven transmembrane receptors. Required for mesoderm and neural ectoderm patterning during gastrulation. Involved in axis formation during embryonic development, via activation of canonical Wnt/CTNNB1 signaling. May be involved in the specification of the spatial patterns of expression of Gsc and other regulatory genes leading to the establishment of the embryonic axis. This chain is Protein Wnt-8a (wnt8a), found in Danio rerio (Zebrafish).